The primary structure comprises 540 residues: Phosphoenolpyruvate carboxykinase (ATP) (540 aa).

Substrate is bound at residue R65. An N6-acetyllysine modification is found at K87. Y207 and K213 together coordinate substrate. Residues K213, H232, and 248-256 (GLSGTGKTT) contribute to the ATP site. Residues K213 and H232 each contribute to the Mn(2+) site. D269 serves as a coordination point for Mn(2+). ATP contacts are provided by residues E297, R333, 449-450 (RI), and T455. R333 is a substrate binding site. The residue at position 523 (K523) is an N6-acetyllysine.

Belongs to the phosphoenolpyruvate carboxykinase (ATP) family. Monomer. Requires Mn(2+) as cofactor.

It localises to the cytoplasm. It carries out the reaction oxaloacetate + ATP = phosphoenolpyruvate + ADP + CO2. The protein operates within carbohydrate biosynthesis; gluconeogenesis. Involved in the gluconeogenesis. Catalyzes the conversion of oxaloacetate (OAA) to phosphoenolpyruvate (PEP) through direct phosphoryl transfer between the nucleoside triphosphate and OAA. The protein is Phosphoenolpyruvate carboxykinase (ATP) of Escherichia coli O7:K1 (strain IAI39 / ExPEC).